The primary structure comprises 1889 residues: Protein TIC 214 (1889 aa).

Transmembrane regions (helical) follow at residues 11–31 (LISLYMTIINSVVMVGLYYGF), 67–87 (FIAGQLMMFISIYYVPLHLAL), 88–108 (GKPHTITVLALPYLLFHFFWN), 127–147 (LSIQCVFLNNLIIQLFNHFIL), 175–195 (VGWLIGHILLMKWVGLVLVWI), and 224–244 (IFSILLFITCVYYLGRIPSPI). Over residues 255–265 (PEEVGESEEER) the composition is skewed to acidic residues. Disordered stretches follow at residues 255–303 (PEEV…PSKE) and 1610–1633 (SNQEKDVEEDYDKSDKKKRRKKKQ). Residues 279-293 (NQKQGTEENTSSSLF) show a composition bias toward polar residues.

The protein belongs to the TIC214 family. In terms of assembly, part of the Tic complex.

It is found in the plastid. The protein resides in the chloroplast inner membrane. Functionally, involved in protein precursor import into chloroplasts. May be part of an intermediate translocation complex acting as a protein-conducting channel at the inner envelope. The chain is Protein TIC 214 from Gossypium barbadense (Sea Island cotton).